A 382-amino-acid polypeptide reads, in one-letter code: Polyadenylate-binding protein 5 (382 aa).

RRM domains follow at residues 18–96 (AALY…WSQP), 106–182 (GNIF…RFKF), 199–276 (TNVF…RAQK), and 302–378 (VPIY…LGQA).

It is found in the cytoplasm. Binds the poly(A) tail of mRNA. May be involved in cytoplasmic regulatory processes of mRNA metabolism. Can probably bind to cytoplasmic RNA sequences other than poly(A) in vivo. The protein is Polyadenylate-binding protein 5 (PABPC5) of Macaca mulatta (Rhesus macaque).